The primary structure comprises 132 residues: uncharacterized protein (132 aa).

3 helical membrane passes run 28 to 48 (LLRL…LIYP), 59 to 79 (ILPS…LFSY), and 106 to 126 (LLVA…VIEI).

It is found in the membrane. This is an uncharacterized protein from Schizosaccharomyces pombe (strain 972 / ATCC 24843) (Fission yeast).